Here is a 137-residue protein sequence, read N- to C-terminus: MGEVWTWIISFLILITLLGLIVYQLISLADLEFDYINPYDSASRINFVVLPESILQGFLCVFYLVTGHWFMALLCVPYLYYNFHLYSRKQHLIDVTEIFNLLDWEKKKRLFKLAYIILTLFLTIFWLIYSTLDDYED.

A run of 3 helical transmembrane segments spans residues 8-28 (IISF…LISL), 54-74 (ILQG…MALL), and 113-133 (LAYI…STLD).

This sequence belongs to the cornichon family.

It localises to the membrane. This is Protein cornichon homolog 3 from Arabidopsis thaliana (Mouse-ear cress).